The chain runs to 327 residues: Phenylalanine--tRNA ligase alpha subunit (327 aa).

Position 252 (E252) interacts with Mg(2+).

Belongs to the class-II aminoacyl-tRNA synthetase family. Phe-tRNA synthetase alpha subunit type 1 subfamily. As to quaternary structure, tetramer of two alpha and two beta subunits. Requires Mg(2+) as cofactor.

The protein resides in the cytoplasm. It carries out the reaction tRNA(Phe) + L-phenylalanine + ATP = L-phenylalanyl-tRNA(Phe) + AMP + diphosphate + H(+). The sequence is that of Phenylalanine--tRNA ligase alpha subunit from Serratia proteamaculans (strain 568).